The primary structure comprises 254 residues: Alcohol dehydrogenase (254 aa).

10 to 33 lines the NAD(+) pocket; the sequence is FVAGLGGIGLDTSREIVKSGPKNL. Ser-138 serves as a coordination point for substrate. The active-site Proton acceptor is Tyr-151.

The protein belongs to the short-chain dehydrogenases/reductases (SDR) family. In terms of assembly, homodimer.

It catalyses the reaction a primary alcohol + NAD(+) = an aldehyde + NADH + H(+). The catalysed reaction is a secondary alcohol + NAD(+) = a ketone + NADH + H(+). In Drosophila lacicola (Fruit fly), this protein is Alcohol dehydrogenase (Adh1).